We begin with the raw amino-acid sequence, 93 residues long: Small hydrophobic protein (93 aa).

Helical transmembrane passes span Leu-5–Tyr-25 and Ala-32–Pro-52.

It localises to the membrane. This Tupaia virus (isolate Tupaia/Thailand/-/1986) (TUPV) protein is Small hydrophobic protein.